The chain runs to 95 residues: Large ribosomal subunit protein bL25 (95 aa).

This sequence belongs to the bacterial ribosomal protein bL25 family. Part of the 50S ribosomal subunit; part of the 5S rRNA/L5/L18/L25 subcomplex. Contacts the 5S rRNA. Binds to the 5S rRNA independently of L5 and L18.

Its function is as follows. This is one of the proteins that binds to the 5S RNA in the ribosome where it forms part of the central protuberance. This Haemophilus influenzae (strain ATCC 51907 / DSM 11121 / KW20 / Rd) protein is Large ribosomal subunit protein bL25.